The sequence spans 100 residues: Cytochrome c2 iso-1 (100 aa).

Heme c-binding residues include Cys11, Cys14, His15, and Met76.

This sequence belongs to the cytochrome c family. In terms of processing, binds 1 heme c group covalently per subunit.

Its function is as follows. Cytochrome c2 is found mainly in purple, non-sulfur, photosynthetic bacteria where it functions as the electron donor to the oxidized bacteriochlorophyll in the photophosphorylation pathway. However, it may also have a role in the respiratory chain and is found in some non-photosynthetic bacteria. The sequence is that of Cytochrome c2 iso-1 from Magnetospirillum molischianum (Rhodospirillum molischianum).